Consider the following 352-residue polypeptide: Light dependent period A (352 aa).

4Fe-4S ferredoxin-type domains are found at residues 88–119 (RRAWFDPDRCPTDCPRPCERVCPTDAITSTGV) and 121–144 (RDRCYGCGRCLPICPLGLIEAQAW). Residues Cys-97, Cys-101, Cys-105, Cys-109, Cys-124, Cys-127, Cys-130, and Cys-134 each contribute to the [4Fe-4S] cluster site.

Interacts with KaiA, CikA and SasA; the complexes do not follow circadian rhythms. It depends on [4Fe-4S] cluster as a cofactor.

In terms of biological role, functions in an input pathway to the Kai circadian clock. Probably senses the metabolic state of the cell via plastoquinone levels and informs the clock to modulate the photoperiod length. Deletion decreases the ability of the bacteria to modulate the circadian period in response to altered light regimes. Mild overexpression increases the photoperiod. Rapidly degraded in the presence of the quinone analog DBMIB (2,5-dibromo-3-methyl-6-isopropyl-p-benzoquinone), an artifical electron acceptor for photosystem II that reduces the plastoquinone pool. Partially resonsible for sensitivity of CikA to DBMIB, influences the levels of KaiA. The chain is Light dependent period A from Synechococcus elongatus (strain ATCC 33912 / PCC 7942 / FACHB-805) (Anacystis nidulans R2).